Here is a 174-residue protein sequence, read N- to C-terminus: MANRKKQSKGKDKDSGWEERVVQVKRVTKVVKGGKKLSFRVILVIGNEQGQVGVGVGKASDVIGAVKKGVTDAKKHLVTVPLTKSNSIPHPINGISGAAKVILRPSAPGSGVIAGGSVRTVLELSGVQNILAKQLGSNNTLNNARAVLNGLTQLRTFSEAAKDRGVPIESLYST.

One can recognise an S5 DRBM domain in the interval 17 to 80 (WEERVVQVKR…TDAKKHLVTV (64 aa)).

The protein belongs to the universal ribosomal protein uS5 family. In terms of assembly, part of the 30S ribosomal subunit. Contacts protein S4.

It localises to the plastid. The protein localises to the chloroplast. Its function is as follows. With S4 and S12 plays an important role in translational accuracy. This Pyropia yezoensis (Susabi-nori) protein is Small ribosomal subunit protein uS5c (rps5).